We begin with the raw amino-acid sequence, 366 residues long: Tyrosine--tRNA ligase (366 aa).

Residues Tyr41, Tyr167, Gln171, Asp174, and Gln189 each coordinate L-tyrosine. The 'KMSKS' region signature appears at 241 to 245 (KMSKS). ATP is bound at residue Lys244.

This sequence belongs to the class-I aminoacyl-tRNA synthetase family. TyrS type 4 subfamily. Homodimer.

It localises to the cytoplasm. The catalysed reaction is tRNA(Tyr) + L-tyrosine + ATP = L-tyrosyl-tRNA(Tyr) + AMP + diphosphate + H(+). In terms of biological role, catalyzes the attachment of tyrosine to tRNA(Tyr) in a two-step reaction: tyrosine is first activated by ATP to form Tyr-AMP and then transferred to the acceptor end of tRNA(Tyr). The protein is Tyrosine--tRNA ligase of Saccharolobus solfataricus (strain ATCC 35092 / DSM 1617 / JCM 11322 / P2) (Sulfolobus solfataricus).